Reading from the N-terminus, the 98-residue chain is Thrombin-like enzyme cerastotin (98 aa).

The Peptidase S1 domain occupies 1–98; it reads VIGGAECNIN…IKKPVNGSTH (98 aa). Active-site charge relay system residues include histidine 41 and aspartate 85. N-linked (GlcNAc...) asparagine glycosylation is present at asparagine 94.

This sequence belongs to the peptidase S1 family. Snake venom subfamily. Monomer. As to expression, expressed by the venom gland.

The protein resides in the secreted. Inhibited by PMSF. In terms of biological role, thrombin-like snake venom serine protease that preferentially cleaves the alpha-chain of fibrinogen (FGA). Induce platelet aggregation in the presence of exogenous fibrinogen. Possesses esterase and amidolytic activities. The sequence is that of Thrombin-like enzyme cerastotin from Cerastes cerastes (Horned desert viper).